The primary structure comprises 293 residues: Bifunctional protein FolD (293 aa).

NADP(+)-binding positions include 165-167, Ser-190, and Ile-231; that span reads GRS.

This sequence belongs to the tetrahydrofolate dehydrogenase/cyclohydrolase family. In terms of assembly, homodimer.

It catalyses the reaction (6R)-5,10-methylene-5,6,7,8-tetrahydrofolate + NADP(+) = (6R)-5,10-methenyltetrahydrofolate + NADPH. The catalysed reaction is (6R)-5,10-methenyltetrahydrofolate + H2O = (6R)-10-formyltetrahydrofolate + H(+). The protein operates within one-carbon metabolism; tetrahydrofolate interconversion. Functionally, catalyzes the oxidation of 5,10-methylenetetrahydrofolate to 5,10-methenyltetrahydrofolate and then the hydrolysis of 5,10-methenyltetrahydrofolate to 10-formyltetrahydrofolate. This Parasynechococcus marenigrum (strain WH8102) protein is Bifunctional protein FolD.